A 150-amino-acid polypeptide reads, in one-letter code: Large ribosomal subunit protein uL15 (150 aa).

A disordered region spans residues 1 to 49; the sequence is MELHQLKSVSKSRNHKSKVVGRGHGSGLGKTSSRGQKGQKARKSGLTRL. Basic residues predominate over residues 10–21; sequence SKSRNHKSKVVG.

This sequence belongs to the universal ribosomal protein uL15 family. In terms of assembly, part of the 50S ribosomal subunit.

Binds to the 23S rRNA. The sequence is that of Large ribosomal subunit protein uL15 from Mycoplasma genitalium (strain ATCC 33530 / DSM 19775 / NCTC 10195 / G37) (Mycoplasmoides genitalium).